The chain runs to 156 residues: MIIGANTSKNFFDNLEEEQIQQCGIDLRVWKIFKIEGEGVIDFSNEKRKLPNYIEIFNSEKDEHIKLDRGVYIVKVADYIKIPENVAGFAYPRSSLLRMGATLYSAVHDPGYEGRPEYLMQVFNPITIYKYARIAQIVFVECRDVKGVYEGIYKGR.

Belongs to the dCTP deaminase family. Archaeal dUTPase subfamily. Homotrimer.

The catalysed reaction is dUTP + H2O = dUMP + diphosphate + H(+). Its pathway is pyrimidine metabolism; dUMP biosynthesis; dUMP from dCTP (dUTP route): step 2/2. This enzyme is involved in nucleotide metabolism: it produces dUMP, the immediate precursor of thymidine nucleotides and it decreases the intracellular concentration of dUTP so that uracil cannot be incorporated into DNA. The protein is Deoxyuridine 5'-triphosphate nucleotidohydrolase of Methanocaldococcus jannaschii (strain ATCC 43067 / DSM 2661 / JAL-1 / JCM 10045 / NBRC 100440) (Methanococcus jannaschii).